Consider the following 297-residue polypeptide: Bifunctional protein FolD (297 aa).

Residues 164 to 166 (GRS), Ser-193, and Val-234 contribute to the NADP(+) site.

Belongs to the tetrahydrofolate dehydrogenase/cyclohydrolase family. In terms of assembly, homodimer.

It carries out the reaction (6R)-5,10-methylene-5,6,7,8-tetrahydrofolate + NADP(+) = (6R)-5,10-methenyltetrahydrofolate + NADPH. The enzyme catalyses (6R)-5,10-methenyltetrahydrofolate + H2O = (6R)-10-formyltetrahydrofolate + H(+). It functions in the pathway one-carbon metabolism; tetrahydrofolate interconversion. In terms of biological role, catalyzes the oxidation of 5,10-methylenetetrahydrofolate to 5,10-methenyltetrahydrofolate and then the hydrolysis of 5,10-methenyltetrahydrofolate to 10-formyltetrahydrofolate. The polypeptide is Bifunctional protein FolD (Natronomonas pharaonis (strain ATCC 35678 / DSM 2160 / CIP 103997 / JCM 8858 / NBRC 14720 / NCIMB 2260 / Gabara) (Halobacterium pharaonis)).